The sequence spans 359 residues: Nicotinate-nucleotide--dimethylbenzimidazole phosphoribosyltransferase (359 aa).

The active-site Proton acceptor is the E318.

The protein belongs to the CobT family. Homodimer.

It catalyses the reaction 5,6-dimethylbenzimidazole + nicotinate beta-D-ribonucleotide = alpha-ribazole 5'-phosphate + nicotinate + H(+). It functions in the pathway nucleoside biosynthesis; alpha-ribazole biosynthesis; alpha-ribazole from 5,6-dimethylbenzimidazole: step 1/2. Functionally, catalyzes the synthesis of alpha-ribazole-5'-phosphate from nicotinate mononucleotide (NAMN) and 5,6-dimethylbenzimidazole (DMB). The protein is Nicotinate-nucleotide--dimethylbenzimidazole phosphoribosyltransferase of Escherichia coli (strain ATCC 8739 / DSM 1576 / NBRC 3972 / NCIMB 8545 / WDCM 00012 / Crooks).